The sequence spans 315 residues: Transmembrane protein 231 (315 aa).

The chain crosses the membrane as a helical span at residues 23 to 43; sequence AALFLLLTTALTYIPPLLVAF. 3 N-linked (GlcNAc...) asparagine glycosylation sites follow: Asn-194, Asn-199, and Asn-221. A helical transmembrane segment spans residues 262 to 282; sequence FWEMIKFAWIQYVSILLIFLW.

This sequence belongs to the TMEM231 family. In terms of assembly, part of the tectonic-like complex (also named B9 complex). Interacts with TMEM107.

The protein localises to the cell projection. Its subcellular location is the cilium membrane. In terms of biological role, transmembrane component of the tectonic-like complex, a complex localized at the transition zone of primary cilia and acting as a barrier that prevents diffusion of transmembrane proteins between the cilia and plasma membranes. Required for ciliogenesis and sonic hedgehog/SHH signaling. This is Transmembrane protein 231 (Tmem231) from Mus musculus (Mouse).